Consider the following 120-residue polypeptide: Fluoride-specific ion channel FluC 1 (120 aa).

Helical transmembrane passes span 3–23 (ALLT…LNCA) and 42–62 (LGCL…VAAL). Residues Gly-69 and Thr-72 each contribute to the Na(+) site. Residues 99 to 119 (ANLAAGVGAAVLGMAAVGWFL) form a helical membrane-spanning segment.

The protein belongs to the fluoride channel Fluc/FEX (TC 1.A.43) family.

The protein localises to the cell membrane. The enzyme catalyses fluoride(in) = fluoride(out). Its activity is regulated as follows. Na(+) is not transported, but it plays an essential structural role and its presence is essential for fluoride channel function. Fluoride-specific ion channel. Important for reducing fluoride concentration in the cell, thus reducing its toxicity. The sequence is that of Fluoride-specific ion channel FluC 1 from Thermobifida fusca (strain YX).